The primary structure comprises 201 residues: Adenylyl-sulfate kinase (201 aa).

35-42 (GLSGSGKS) contributes to the ATP binding site. S109 (phosphoserine intermediate) is an active-site residue.

The protein belongs to the APS kinase family.

It catalyses the reaction adenosine 5'-phosphosulfate + ATP = 3'-phosphoadenylyl sulfate + ADP + H(+). It participates in sulfur metabolism; hydrogen sulfide biosynthesis; sulfite from sulfate: step 2/3. Functionally, catalyzes the synthesis of activated sulfate. In Citrobacter koseri (strain ATCC BAA-895 / CDC 4225-83 / SGSC4696), this protein is Adenylyl-sulfate kinase.